We begin with the raw amino-acid sequence, 151 residues long: Large ribosomal subunit protein uL22 (151 aa).

This sequence belongs to the universal ribosomal protein uL22 family. In terms of assembly, part of the 50S ribosomal subunit.

Functionally, this protein binds specifically to 23S rRNA. It makes multiple contacts with different domains of the 23S rRNA in the assembled 50S subunit and ribosome. In terms of biological role, the globular domain of the protein is located near the polypeptide exit tunnel on the outside of the subunit, while an extended beta-hairpin is found that lines the wall of the exit tunnel in the center of the 70S ribosome. The sequence is that of Large ribosomal subunit protein uL22 from Thermoplasma acidophilum (strain ATCC 25905 / DSM 1728 / JCM 9062 / NBRC 15155 / AMRC-C165).